The primary structure comprises 416 residues: Ribulose bisphosphate carboxylase large chain (416 aa).

The substrate site is built by Asn102 and Thr152. Lys154 (proton acceptor) is an active-site residue. Lys156 contacts substrate. Positions 180, 182, and 183 each coordinate Mg(2+). Lys180 carries the post-translational modification N6-carboxylysine. The active-site Proton acceptor is the His273. Substrate is bound by residues Arg274, His306, and Ser358.

It belongs to the RuBisCO large chain family. Type I subfamily. As to quaternary structure, heterohexadecamer of 8 large chains and 8 small chains; disulfide-linked. The disulfide link is formed within the large subunit homodimers. Requires Mg(2+) as cofactor. Post-translationally, the disulfide bond which can form in the large chain dimeric partners within the hexadecamer appears to be associated with oxidative stress and protein turnover.

It is found in the plastid. It localises to the chloroplast. It catalyses the reaction 2 (2R)-3-phosphoglycerate + 2 H(+) = D-ribulose 1,5-bisphosphate + CO2 + H2O. The catalysed reaction is D-ribulose 1,5-bisphosphate + O2 = 2-phosphoglycolate + (2R)-3-phosphoglycerate + 2 H(+). Functionally, ruBisCO catalyzes two reactions: the carboxylation of D-ribulose 1,5-bisphosphate, the primary event in carbon dioxide fixation, as well as the oxidative fragmentation of the pentose substrate in the photorespiration process. Both reactions occur simultaneously and in competition at the same active site. The chain is Ribulose bisphosphate carboxylase large chain (rbcL) from Arthropteris beckleri (Fern).